The primary structure comprises 193 residues: dCTP deaminase (193 aa).

DCTP is bound by residues 110-115, aspartate 128, 136-138, tyrosine 171, lysine 178, and glutamine 182; these read RSSLAR and VLE. Glutamate 138 serves as the catalytic Proton donor/acceptor. The segment covering 170-181 has biased composition (basic and acidic residues); it reads PYNRRQDAKYRD. Residues 170 to 193 are disordered; sequence PYNRRQDAKYRDQQGAVASRIDKD.

Belongs to the dCTP deaminase family. As to quaternary structure, homotrimer.

It catalyses the reaction dCTP + H2O + H(+) = dUTP + NH4(+). It functions in the pathway pyrimidine metabolism; dUMP biosynthesis; dUMP from dCTP (dUTP route): step 1/2. Catalyzes the deamination of dCTP to dUTP. The polypeptide is dCTP deaminase (Enterobacter sp. (strain 638)).